A 301-amino-acid polypeptide reads, in one-letter code: Pyridoxal 5'-phosphate synthase subunit PdxS (301 aa).

Asp31 is a binding site for D-ribose 5-phosphate. Lys88 serves as the catalytic Schiff-base intermediate with D-ribose 5-phosphate. Residue Gly160 coordinates D-ribose 5-phosphate. Lys172 provides a ligand contact to D-glyceraldehyde 3-phosphate. Residues Gly221 and 242-243 each bind D-ribose 5-phosphate; that span reads GS.

Belongs to the PdxS/SNZ family. In terms of assembly, in the presence of PdxT, forms a dodecamer of heterodimers.

It carries out the reaction aldehydo-D-ribose 5-phosphate + D-glyceraldehyde 3-phosphate + L-glutamine = pyridoxal 5'-phosphate + L-glutamate + phosphate + 3 H2O + H(+). It functions in the pathway cofactor biosynthesis; pyridoxal 5'-phosphate biosynthesis. In terms of biological role, catalyzes the formation of pyridoxal 5'-phosphate from ribose 5-phosphate (RBP), glyceraldehyde 3-phosphate (G3P) and ammonia. The ammonia is provided by the PdxT subunit. Can also use ribulose 5-phosphate and dihydroxyacetone phosphate as substrates, resulting from enzyme-catalyzed isomerization of RBP and G3P, respectively. The polypeptide is Pyridoxal 5'-phosphate synthase subunit PdxS (Methanosarcina acetivorans (strain ATCC 35395 / DSM 2834 / JCM 12185 / C2A)).